The primary structure comprises 108 residues: DNA-binding protein HBbu (108 aa).

Belongs to the bacterial histone-like protein family.

Its function is as follows. Histone-like DNA-binding protein which is capable of wrapping DNA to stabilize it, and thus to prevent its denaturation under extreme environmental conditions. This Borrelia turicatae protein is DNA-binding protein HBbu (hbb).